The primary structure comprises 339 residues: Undifferentiated embryonic cell transcription factor 1 (339 aa).

Disordered stretches follow at residues 1 to 62 (MLLR…QRTP) and 144 to 270 (MGLL…QVAP). Serine 15, serine 18, serine 48, and serine 54 each carry phosphoserine. Basic residues predominate over residues 154–170 (RVRRRSTGPGRPQRRGR). Low complexity-rich tracts occupy residues 171–193 (SSLS…PLAA) and 218–229 (TSSPPLTSTDTL). Positions 261-270 (GRASSPQVAP) are enriched in polar residues. Residues 279 to 310 (QTLTHLGDISTVLGPLRDQLSTLNQHVEHLRG) are leucine-zipper.

Binds to the N-terminal region of ATF2. Associates with the TFIID complex through interaction with TBP. Post-translationally, phosphorylated. In terms of tissue distribution, expressed mainly in pluripotent cells with expression rapidly down-regulated upon cell differentiation.

The protein resides in the nucleus. Acts as a transcriptional coactivator of ATF2. This Mus musculus (Mouse) protein is Undifferentiated embryonic cell transcription factor 1.